A 117-amino-acid chain; its full sequence is Large ribosomal subunit protein bL20c (117 aa).

Belongs to the bacterial ribosomal protein bL20 family.

The protein resides in the plastid. It localises to the chloroplast. Functionally, binds directly to 23S ribosomal RNA and is necessary for the in vitro assembly process of the 50S ribosomal subunit. It is not involved in the protein synthesizing functions of that subunit. This chain is Large ribosomal subunit protein bL20c, found in Thalassiosira pseudonana (Marine diatom).